Reading from the N-terminus, the 341-residue chain is Methionine import ATP-binding protein MetN 2 (341 aa).

One can recognise an ABC transporter domain in the interval 2-241; that stretch reads INLQNVSKIY…PKEEMTKRFV (240 aa). 38-45 provides a ligand contact to ATP; the sequence is GYSGAGKS.

It belongs to the ABC transporter superfamily. Methionine importer (TC 3.A.1.24) family. In terms of assembly, the complex is composed of two ATP-binding proteins (MetN), two transmembrane proteins (MetI) and a solute-binding protein (MetQ).

It is found in the cell membrane. It carries out the reaction L-methionine(out) + ATP + H2O = L-methionine(in) + ADP + phosphate + H(+). It catalyses the reaction D-methionine(out) + ATP + H2O = D-methionine(in) + ADP + phosphate + H(+). Functionally, part of the ABC transporter complex MetNIQ involved in methionine import. Responsible for energy coupling to the transport system. The polypeptide is Methionine import ATP-binding protein MetN 2 (Bacillus licheniformis (strain ATCC 14580 / DSM 13 / JCM 2505 / CCUG 7422 / NBRC 12200 / NCIMB 9375 / NCTC 10341 / NRRL NRS-1264 / Gibson 46)).